The sequence spans 453 residues: Endoglucanase A (453 aa).

An N-terminal signal peptide occupies residues M1–S26. Catalysis depends on D82, which acts as the Nucleophile. The interval T115–P126 is linker ('hinge') (Pro-Thr box). H417 is an active-site residue.

Belongs to the glycosyl hydrolase 9 (cellulase E) family. As to quaternary structure, monomer.

The protein localises to the periplasm. It catalyses the reaction Endohydrolysis of (1-&gt;4)-beta-D-glucosidic linkages in cellulose, lichenin and cereal beta-D-glucans.. Functionally, high levels of endoglucanase activity detected on acid-swollen cellulose, ball-milled cellulose, and carboxymethyl cellulose; moderate levels detected on filter paper, phosphoric acid-swollen cellulose, lichenan, and xylan. The polypeptide is Endoglucanase A (endA) (Fibrobacter succinogenes (Bacteroides succinogenes)).